We begin with the raw amino-acid sequence, 180 residues long: MATVRPFDKMPMLNAAALLLVGTEESHREQLASAMLKEPKTFEVKIHMAQSLPLPYEREHLRPRFDMVVFLINLHSQLSLSTILASLTQLDVNFFLGKVCFVATGGGQVKHCMVDIATVKKLADTHLSTLLFSEFASEDDVTCTAQRLLQMLKICAGLVPGISALYLGSFMSSTLQTDQF.

The protein localises to the nucleus. It localises to the chromosome. The protein resides in the centromere. Its function is as follows. Probable component of a centromeric complex involved in assembly of kinetochore proteins, mitotic progression and chromosome segregation. The polypeptide is Centromere protein M (cenpm) (Xenopus laevis (African clawed frog)).